Here is a 209-residue protein sequence, read N- to C-terminus: Large ribosomal subunit protein uL3 (209 aa).

Gln-150 is subject to N5-methylglutamine.

It belongs to the universal ribosomal protein uL3 family. Part of the 50S ribosomal subunit. Forms a cluster with proteins L14 and L19. Post-translationally, methylated by PrmB.

Functionally, one of the primary rRNA binding proteins, it binds directly near the 3'-end of the 23S rRNA, where it nucleates assembly of the 50S subunit. This chain is Large ribosomal subunit protein uL3, found in Buchnera aphidicola subsp. Schizaphis graminum (strain Sg).